The chain runs to 156 residues: Snaclec A6 (156 aa).

The N-terminal stretch at 1-23 is a signal peptide; sequence MGRSISVSFGLLVVFLSLSGTGA. 3 disulfides stabilise this stretch: Cys27–Cys38, Cys55–Cys154, and Cys129–Cys146. The C-type lectin domain maps to 34-155; sequence HEGHCYKVFN…CGKPYRFTCE (122 aa).

Belongs to the snaclec family. As to quaternary structure, heterodimer; disulfide-linked. Expressed by the venom gland.

It localises to the secreted. Its function is as follows. Interferes with one step of hemostasis (modulation of platelet aggregation, or coagulation cascade, for example). This is Snaclec A6 from Macrovipera lebetinus (Levantine viper).